Consider the following 289-residue polypeptide: Enoyl-CoA delta isomerase 1, mitochondrial (289 aa).

The N-terminal 28 residues, 1–28, are a transit peptide targeting the mitochondrion; that stretch reads MALAAARRLLLHAGSRLGRREAVDGARR. An N6-acetyllysine; alternate modification is found at K48. Residue K48 is modified to N6-succinyllysine; alternate. Residue K71 is modified to N6-succinyllysine. Residue K76 is modified to N6-acetyllysine. Residues 93–97, G140, and N164 contribute to the substrate site; that span reads AGLDL. 4 positions are modified to N6-acetyllysine; alternate: K222, K229, K255, and K270. N6-succinyllysine; alternate is present on residues K222, K229, K255, and K270. K275 is subject to N6-succinyllysine. Position 283 is an N6-acetyllysine; alternate (K283). The residue at position 283 (K283) is an N6-succinyllysine; alternate.

Belongs to the enoyl-CoA hydratase/isomerase family. Homotrimer.

It is found in the mitochondrion matrix. It catalyses the reaction a (3Z)-enoyl-CoA = a 4-saturated (2E)-enoyl-CoA. The enzyme catalyses a (3E)-enoyl-CoA = a 4-saturated (2E)-enoyl-CoA. It carries out the reaction (3Z)-octenoyl-CoA = (2E)-octenoyl-CoA. The catalysed reaction is (2E)-tetradecenoyl-CoA = (3Z)-tetradecenoyl-CoA. It catalyses the reaction (3Z)-dodecenoyl-CoA = (2E)-dodecenoyl-CoA. The enzyme catalyses (3Z)-hexenoyl-CoA = (2E)-hexenoyl-CoA. It carries out the reaction (3Z)-decenoyl-CoA = (2E)-decenoyl-CoA. The protein operates within lipid metabolism; fatty acid beta-oxidation. Functionally, key enzyme of fatty acid beta-oxidation. Able to isomerize both 3-cis (3Z) and 3-trans (3E) double bonds into the 2-trans (2E) form in a range of enoyl-CoA species, with a preference for (3Z)-enoyl-CoAs over (3E)-enoyl-CoAs. The catalytic efficiency of this enzyme is not affected by the fatty acyl chain length. In Mus musculus (Mouse), this protein is Enoyl-CoA delta isomerase 1, mitochondrial.